Consider the following 549-residue polypeptide: Glucose-6-phosphate isomerase (549 aa).

Glu-355 serves as the catalytic Proton donor. Active-site residues include His-386 and Lys-514.

This sequence belongs to the GPI family.

The protein localises to the cytoplasm. It catalyses the reaction alpha-D-glucose 6-phosphate = beta-D-fructose 6-phosphate. It participates in carbohydrate biosynthesis; gluconeogenesis. It functions in the pathway carbohydrate degradation; glycolysis; D-glyceraldehyde 3-phosphate and glycerone phosphate from D-glucose: step 2/4. Catalyzes the reversible isomerization of glucose-6-phosphate to fructose-6-phosphate. This chain is Glucose-6-phosphate isomerase, found in Sodalis glossinidius (strain morsitans).